Consider the following 145-residue polypeptide: 3-dehydroquinate dehydratase (145 aa).

The Proton acceptor role is filled by Tyr-24. 3 residues coordinate substrate: Asn-75, His-81, and Asp-88. His-101 (proton donor) is an active-site residue. Substrate contacts are provided by residues 102-103 (IS) and Arg-112.

The protein belongs to the type-II 3-dehydroquinase family. As to quaternary structure, homododecamer.

The enzyme catalyses 3-dehydroquinate = 3-dehydroshikimate + H2O. It functions in the pathway metabolic intermediate biosynthesis; chorismate biosynthesis; chorismate from D-erythrose 4-phosphate and phosphoenolpyruvate: step 3/7. Catalyzes a trans-dehydration via an enolate intermediate. The chain is 3-dehydroquinate dehydratase from Rhizobium etli (strain CIAT 652).